The following is a 1575-amino-acid chain: Ras GTPase-activating-like protein IQGAP2 (1575 aa).

S16 carries the post-translational modification Phosphoserine. One can recognise a Calponin-homology (CH) domain in the interval 41–156; that stretch reads LCHLEEAKRW…YCIHALSLYL (116 aa). T356 bears the Phosphothreonine mark. Residues 594–627 enclose the WW domain; it reads VSSDGSWLKLNLHKKYDYYYNTDSKESSWVTPES. S595, S599, and S685 each carry phosphoserine. IQ domains are found at residues 690–719, 720–749, and 750–779; these read QEEN…TFID, NTDS…YFRD, and HNNE…SENP. Phosphothreonine is present on T716. Phosphothreonine is present on residues T782, T881, T1002, and T1269. In terms of domain architecture, Ras-GAP spans 933 to 1182; that stretch reads YLLLKLFKTA…QEFRKYFKEA (250 aa). 4 positions are modified to phosphoserine: S1271, S1279, S1358, and S1461.

As to expression, isoform 2 expression is enhanced in testis.

In terms of biological role, binds to activated CDC42 and RAC1 but does not seem to stimulate their GTPase activity. Associates with calmodulin. The polypeptide is Ras GTPase-activating-like protein IQGAP2 (IQGAP2) (Homo sapiens (Human)).